Reading from the N-terminus, the 925-residue chain is Eukaryotic translation initiation factor 3 subunit A (925 aa).

Positions 108 to 127 (QAQTDAKEESNKDQAEEDLE) are disordered. Residues 112–121 (DAKEESNKDQ) show a composition bias toward basic and acidic residues. The region spanning 324 to 498 (FKFYSSQFVL…DTVSFAQDPF (175 aa)) is the PCI domain. Disordered stretches follow at residues 509 to 544 (PESSTSDEAKNSESEEETSQETHADEEQNEQVFTRN) and 839 to 925 (KEAL…AGRG). 2 coiled-coil regions span residues 534 to 666 (EEQN…MKKL) and 785 to 885 (SVIA…SSRS). A compositionally biased stretch (basic and acidic residues) spans 839-880 (KEALAKEEELAKRRAERERINKERDEIARKQREIEELLEKKN). Residues 916–925 (RLKRMNAGRG) show a composition bias toward basic residues.

This sequence belongs to the eIF-3 subunit A family. Component of the eukaryotic translation initiation factor 3 (eIF-3) complex.

It localises to the cytoplasm. RNA-binding component of the eukaryotic translation initiation factor 3 (eIF-3) complex, which is involved in protein synthesis of a specialized repertoire of mRNAs and, together with other initiation factors, stimulates binding of mRNA and methionyl-tRNAi to the 40S ribosome. The eIF-3 complex specifically targets and initiates translation of a subset of mRNAs involved in cell proliferation. The polypeptide is Eukaryotic translation initiation factor 3 subunit A (Kluyveromyces lactis (strain ATCC 8585 / CBS 2359 / DSM 70799 / NBRC 1267 / NRRL Y-1140 / WM37) (Yeast)).